The sequence spans 300 residues: Diaminopimelate epimerase (300 aa).

Residues asparagine 15, glutamine 47, and asparagine 67 each coordinate substrate. Catalysis depends on cysteine 76, which acts as the Proton donor. Substrate is bound by residues glycine 77 to asparagine 78, asparagine 163, asparagine 197, and glutamate 215 to arginine 216. The active-site Proton acceptor is cysteine 224. Glycine 225 to serine 226 provides a ligand contact to substrate. Residues serine 275–alanine 300 are disordered. The span at tryptophan 285–alanine 300 shows a compositional bias: basic and acidic residues.

The protein belongs to the diaminopimelate epimerase family. In terms of assembly, homodimer.

It is found in the cytoplasm. It catalyses the reaction (2S,6S)-2,6-diaminopimelate = meso-2,6-diaminopimelate. It functions in the pathway amino-acid biosynthesis; L-lysine biosynthesis via DAP pathway; DL-2,6-diaminopimelate from LL-2,6-diaminopimelate: step 1/1. In terms of biological role, catalyzes the stereoinversion of LL-2,6-diaminopimelate (L,L-DAP) to meso-diaminopimelate (meso-DAP), a precursor of L-lysine and an essential component of the bacterial peptidoglycan. The chain is Diaminopimelate epimerase from Brucella anthropi (strain ATCC 49188 / DSM 6882 / CCUG 24695 / JCM 21032 / LMG 3331 / NBRC 15819 / NCTC 12168 / Alc 37) (Ochrobactrum anthropi).